The primary structure comprises 207 residues: N-(5'-phosphoribosyl)anthranilate isomerase (207 aa).

This sequence belongs to the TrpF family.

It catalyses the reaction N-(5-phospho-beta-D-ribosyl)anthranilate = 1-(2-carboxyphenylamino)-1-deoxy-D-ribulose 5-phosphate. The protein operates within amino-acid biosynthesis; L-tryptophan biosynthesis; L-tryptophan from chorismate: step 3/5. In Legionella pneumophila (strain Paris), this protein is N-(5'-phosphoribosyl)anthranilate isomerase.